The chain runs to 305 residues: P2Y purinoceptor 14 (305 aa).

Topologically, residues methionine 1–tyrosine 29 are extracellular. A glycan (N-linked (GlcNAc...) asparagine) is linked at asparagine 3. Residues cysteine 30–valine 50 form a helical membrane-spanning segment. The Cytoplasmic portion of the chain corresponds to proline 51–serine 55. Residues phenylalanine 56–phenylalanine 76 form a helical membrane-spanning segment. Residues lysine 77–valine 96 lie on the Extracellular side of the membrane. A helical transmembrane segment spans residues serine 97 to phenylalanine 117. Topologically, residues aspartate 118–lysine 139 are cytoplasmic. A helical transmembrane segment spans residues valine 140–threonine 160. Asparagine 161 carries an N-linked (GlcNAc...) asparagine glycan. Topologically, residues asparagine 161–asparagine 188 are extracellular. The helical transmembrane segment at tyrosine 189–isoleucine 209 threads the bilayer. The Cytoplasmic segment spans residues threonine 210 to asparagine 234. The helical transmembrane segment at isoleucine 235–proline 255 threads the bilayer. Residues tyrosine 256–glutamate 278 lie on the Extracellular side of the membrane. A helical membrane pass occupies residues phenylalanine 279–alanine 299. At serine 300 to serine 305 the chain is on the cytoplasmic side.

Belongs to the G-protein coupled receptor 1 family.

It localises to the cell membrane. Receptor for UDP-glucose coupled to G-proteins. This Rattus norvegicus (Rat) protein is P2Y purinoceptor 14 (P2ry14).